The following is an 80-amino-acid chain: Bowman-Birk type proteinase inhibitor DE-4 (80 aa).

A compositionally biased stretch (acidic residues) spans 1–10 (DDDHSDDEPR). A disordered region spans residues 1–29 (DDDHSDDEPRESESSKPCCSSCCTRSRPP). Positions 15-29 (SKPCCSSCCTRSRPP) are enriched in low complexity. 7 disulfides stabilise this stretch: Cys18-Cys71, Cys19-Cys33, Cys22-Cys67, Cys23-Cys31, Cys41-Cys48, Cys45-Cys60, and Cys50-Cys58.

Belongs to the Bowman-Birk serine protease inhibitor family.

In Philenoptera violacea (Apple-leaf), this protein is Bowman-Birk type proteinase inhibitor DE-4.